Reading from the N-terminus, the 148-residue chain is MSNRRSKARTAALQGLYQWQLMGQDVDKIDIEFIVQDIRGIDHAYFQELLRGVPQRQGELDECLGPFLDRPINEVDPVECAILRIGAFELLCRPEIPYRVVLNEAIELAKRFGAEHGHRYVNGILDKVAQKVRATEFRSRALRRRLQT.

The protein belongs to the NusB family.

In terms of biological role, involved in transcription antitermination. Required for transcription of ribosomal RNA (rRNA) genes. Binds specifically to the boxA antiterminator sequence of the ribosomal RNA (rrn) operons. This is Transcription antitermination protein NusB from Nitrosococcus oceani (strain ATCC 19707 / BCRC 17464 / JCM 30415 / NCIMB 11848 / C-107).